Reading from the N-terminus, the 464-residue chain is Dihydrolipoyl dehydrogenase (464 aa).

Residues 36–44 (EGAALGGTC), Lys-53, and Ala-119 contribute to the FAD site. Cys-44 and Cys-49 are joined by a disulfide. Residues 184–188 (GGGYI), Glu-207, and 269–272 (AVGR) contribute to the NAD(+) site. Residues Asp-311 and Ala-319 each contribute to the FAD site. The Proton acceptor role is filled by His-443.

This sequence belongs to the class-I pyridine nucleotide-disulfide oxidoreductase family. In terms of assembly, homodimer. The cofactor is FAD.

The protein localises to the cytoplasm. The enzyme catalyses N(6)-[(R)-dihydrolipoyl]-L-lysyl-[protein] + NAD(+) = N(6)-[(R)-lipoyl]-L-lysyl-[protein] + NADH + H(+). In terms of biological role, the branched-chain alpha-keto dehydrogenase complex catalyzes the overall conversion of alpha-keto acids to acyl-CoA and CO(2). It contains multiple copies of 3 enzymatic components: branched-chain alpha-keto acid decarboxylase (E1), lipoamide acyltransferase (E2) and lipoamide dehydrogenase (E3). The polypeptide is Dihydrolipoyl dehydrogenase (Pseudomonas aeruginosa (strain ATCC 15692 / DSM 22644 / CIP 104116 / JCM 14847 / LMG 12228 / 1C / PRS 101 / PAO1)).